The sequence spans 404 residues: Adenylosuccinate synthetase (404 aa).

Residues 12–18 (GDEGKGK) and 40–42 (GHT) contribute to the GTP site. Catalysis depends on D13, which acts as the Proton acceptor. Residues D13 and G40 each coordinate Mg(2+). Residues 13 to 16 (DEGK), 38 to 41 (NAGH), T121, R135, Q213, T228, and R296 each bind IMP. H41 functions as the Proton donor in the catalytic mechanism. 292–298 (TTTGRAR) lines the substrate pocket. Residues R298, 324–326 (KMD), and 389–391 (SCG) contribute to the GTP site.

Belongs to the adenylosuccinate synthetase family. Homodimer. The cofactor is Mg(2+).

The protein localises to the cytoplasm. It carries out the reaction IMP + L-aspartate + GTP = N(6)-(1,2-dicarboxyethyl)-AMP + GDP + phosphate + 2 H(+). Its pathway is purine metabolism; AMP biosynthesis via de novo pathway; AMP from IMP: step 1/2. Its function is as follows. Plays an important role in the de novo pathway of purine nucleotide biosynthesis. Catalyzes the first committed step in the biosynthesis of AMP from IMP. This chain is Adenylosuccinate synthetase, found in Deinococcus geothermalis (strain DSM 11300 / CIP 105573 / AG-3a).